The following is a 303-amino-acid chain: Trans-aconitate 2-methyltransferase (303 aa).

The tract at residues 271–303 (EGSGGSGGSGGSAGSAGCAGSGGSVGPAGEAGR) is disordered. Residues 272–303 (GSGGSGGSGGSAGSAGCAGSGGSVGPAGEAGR) are compositionally biased toward gly residues.

It belongs to the methyltransferase superfamily. Tam family.

It localises to the cytoplasm. It carries out the reaction trans-aconitate + S-adenosyl-L-methionine = (E)-3-(methoxycarbonyl)pent-2-enedioate + S-adenosyl-L-homocysteine. In terms of biological role, catalyzes the S-adenosylmethionine monomethyl esterification of trans-aconitate. This Streptomyces coelicolor (strain ATCC BAA-471 / A3(2) / M145) protein is Trans-aconitate 2-methyltransferase.